We begin with the raw amino-acid sequence, 155 residues long: Large ribosomal subunit protein uL30 (155 aa).

The protein belongs to the universal ribosomal protein uL30 family. Part of the 50S ribosomal subunit.

The polypeptide is Large ribosomal subunit protein uL30 (Nanoarchaeum equitans (strain Kin4-M)).